The primary structure comprises 388 residues: Staphopain A (388 aa).

The N-terminal stretch at Met-1–Ala-25 is a signal peptide. A propeptide spanning residues Glu-26–Thr-214 is cleaved from the precursor. Residues Cys-238, His-334, and Asn-355 contribute to the active site.

It belongs to the peptidase C47 family. In the cytoplasm, prematurely activated/folded ScpA forms a stable non-covalent complex with ScpB. In terms of processing, cleavage leads to the activation of ScpA probably by an auto-catalytic manner.

Its subcellular location is the secreted. It catalyses the reaction Broad endopeptidase action on proteins including elastin, but rather limited hydrolysis of small-molecule substrates. Assays are conveniently made with hemoglobin, casein or Z-Phe-Arg-NHMec as substrate.. With respect to regulation, prematurely activated/folded staphopain A is inhibited by staphostatin A (ScpB), which is probably required to protect staphylococcal cytoplasmic proteins from degradation by ScpA. Also inactivated by heavy metal ions such as Hg(2+) or Ag(+), iodoacetamide, E-64 and human plasma. Its function is as follows. Cysteine protease that plays an important role in the inhibition of host innate immune response. Cleaves host elastins found in connective tissues, pulmonary surfactant protein A in the lungs, and the chemokine receptor CXCR2 on leukocytes. Proteolytic cleavage of surfactant protein A impairs bacterial phagocytosis by neutrophils while CXCR2 degradation blocks neutrophil activation and chemotaxis. Additionally, promotes vascular leakage by activating the plasma kallikerin/kinin system, resulting in hypotension. The chain is Staphopain A (sspP) from Staphylococcus aureus.